Here is a 532-residue protein sequence, read N- to C-terminus: Beta-hexosaminidase subunit A1 (532 aa).

A signal peptide spans 1–18; the sequence is MIKKIILFFAVLIAIVIG. N-linked (GlcNAc...) asparagine glycosylation is found at Asn-72 and Asn-79. Glu-308 (proton donor) is an active-site residue. N-linked (GlcNAc...) asparagine glycans are attached at residues Asn-350 and Asn-427.

The protein belongs to the glycosyl hydrolase 20 family. In terms of assembly, dimer. In terms of processing, the N-terminus is blocked. N-glycosylated.

The protein resides in the lysosome. The catalysed reaction is Hydrolysis of terminal non-reducing N-acetyl-D-hexosamine residues in N-acetyl-beta-D-hexosaminides.. Functionally, responsible for the degradation of GM2 gangliosides, and a variety of other molecules containing terminal N-acetyl hexosamines. This enzyme plays a role during the slug stage of development in the maintenance of pseudoplasmodia of normal size. The polypeptide is Beta-hexosaminidase subunit A1 (hexa1) (Dictyostelium discoideum (Social amoeba)).